The following is a 227-amino-acid chain: Leucyl/phenylalanyl-tRNA--protein transferase (227 aa).

Belongs to the L/F-transferase family.

Its subcellular location is the cytoplasm. It catalyses the reaction N-terminal L-lysyl-[protein] + L-leucyl-tRNA(Leu) = N-terminal L-leucyl-L-lysyl-[protein] + tRNA(Leu) + H(+). The catalysed reaction is N-terminal L-arginyl-[protein] + L-leucyl-tRNA(Leu) = N-terminal L-leucyl-L-arginyl-[protein] + tRNA(Leu) + H(+). The enzyme catalyses L-phenylalanyl-tRNA(Phe) + an N-terminal L-alpha-aminoacyl-[protein] = an N-terminal L-phenylalanyl-L-alpha-aminoacyl-[protein] + tRNA(Phe). Its function is as follows. Functions in the N-end rule pathway of protein degradation where it conjugates Leu, Phe and, less efficiently, Met from aminoacyl-tRNAs to the N-termini of proteins containing an N-terminal arginine or lysine. This chain is Leucyl/phenylalanyl-tRNA--protein transferase, found in Afipia carboxidovorans (strain ATCC 49405 / DSM 1227 / KCTC 32145 / OM5) (Oligotropha carboxidovorans).